Consider the following 481-residue polypeptide: UDP-glycosyltransferase 71K2 (481 aa).

UDP-alpha-D-glucose contacts are provided by residues Ser-285, 350-351 (WA), 368-376 (HCGWNSILE), and 390-393 (YAEQ).

Belongs to the UDP-glycosyltransferase family.

Its function is as follows. Glycosyltransferase that possesses chalcone and flavonol 2'-O-glycosyltransferase activity. Converts phloretin to phlorizin (phloretin 2'-O-glucoside), a potent antioxidant. Possesses glycosyltransferase activity toward quercetin, isoliquiritigenin, butein and caffeic acid. The chain is UDP-glycosyltransferase 71K2 from Pyrus communis (Pear).